Reading from the N-terminus, the 66-residue chain is Large ribosomal subunit protein bL33c (66 aa).

The protein belongs to the bacterial ribosomal protein bL33 family.

It localises to the plastid. Its subcellular location is the chloroplast. The sequence is that of Large ribosomal subunit protein bL33c from Eucalyptus globulus subsp. globulus (Tasmanian blue gum).